The following is a 127-amino-acid chain: Putative pre-16S rRNA nuclease (127 aa).

The protein belongs to the YqgF nuclease family.

It is found in the cytoplasm. Could be a nuclease involved in processing of the 5'-end of pre-16S rRNA. This chain is Putative pre-16S rRNA nuclease, found in Campylobacter jejuni subsp. jejuni serotype O:23/36 (strain 81-176).